Reading from the N-terminus, the 139-residue chain is uncharacterized protein (139 aa).

Polar residues predominate over residues 1–11 (MALSMSLSSDI). Disordered stretches follow at residues 1 to 80 (MALS…AAAA) and 100 to 139 (ASSPAGEAGSWGRARRGGPRPGAPCKGLAGPPLRPGLARS). Residues 63 to 80 (GAGSASAGGSRLAAAAAA) show a composition bias toward low complexity.

This is an uncharacterized protein from Homo sapiens (Human).